An 85-amino-acid chain; its full sequence is Large ribosomal subunit protein bL27 (85 aa).

Residues 1–20 are disordered; the sequence is MAHKKAGGSTRNGRDSEAKR.

The protein belongs to the bacterial ribosomal protein bL27 family.

The protein is Large ribosomal subunit protein bL27 of Serratia proteamaculans (strain 568).